A 494-amino-acid chain; its full sequence is MKFLAVLLAAGMLAFLGAVICIIASVPLAASPARALPGGTDNASAASAAGAPGPQRSLSALQGAGGSAGPSVLPGEPAASVFPPPPGPLLSRFLCTPLAAACPSGAEQGDAAGERAELLLLQSTAEQLRQTALQQEARIRADRDTIRELTGKLGRCESGLPRGLQDAGPRRDTMADGAWDSPALLVELENAVRALRDRIERIEQELPARGNLSSSAPAPAVPTALHSKMDELEGQLLAKVLALEKERAALSHGSHQQRQEVEKELDALQGRVAELEHGSSAYSPPDAFKVSIPIRNNYMYARVRKAVPELYAFTACMWLRSRSGGSGQGTPFSYSVPGQANEIVLLEAGLEPMELLINDKVAQLPLSLKDSNWHHICIAWTTRDGLWSAYQDGELRGSGENLAAWHPIKPHGILILGQEQDTLGGRFDATQAFVGDIAQFNLWDHALTPAQVLGIANCTGPLMGNVLPWEDKLVEAFGGAKKAAFDVCKRRAKA.

Residues 1–2 (MK) are Cytoplasmic-facing. Residues 3-23 (FLAVLLAAGMLAFLGAVICII) form a helical; Signal-anchor for type II membrane protein membrane-spanning segment. Residues 24-494 (ASVPLAASPA…FDVCKRRAKA (471 aa)) are Extracellular-facing. The tract at residues 37-80 (PGGTDNASAASAAGAPGPQRSLSALQGAGGSAGPSVLPGEPAAS) is disordered. An N-linked (GlcNAc...) asparagine glycan is attached at N42. Composition is skewed to low complexity over residues 43-62 (ASAA…SALQ) and 69-80 (GPSVLPGEPAAS). An N-linked (GlcNAc...) asparagine glycan is attached at N211. Positions 286–488 (DAFKVSIPIR…GAKKAAFDVC (203 aa)) constitute a Pentraxin (PTX) domain. The cysteines at positions 316 and 377 are disulfide-linked. Ca(2+) is bound by residues N341, E419, Q420, D421, and Q431. A glycan (N-linked (GlcNAc...) asparagine) is linked at N457.

In terms of assembly, interacts with KLHL2. Heteropentamer with NPTX1 and/or NPTX2. Also binds taipoxin-associated calcium-binding protein 49 (TCBP49/RCN2). It depends on Ca(2+) as a cofactor. N-glycosylated. Post-translationally, ubiquitinated by a cullin-RING-based BCR (BTB-CUL3-RBX1) E3 ubiquitin-protein ligase complex containing KLHL2. As to expression, brain specific.

The protein localises to the membrane. May be involved in mediating uptake of synaptic material during synapse remodeling or in mediating the synaptic clustering of AMPA glutamate receptors at a subset of excitatory synapses. The sequence is that of Neuronal pentraxin receptor (Nptxr) from Rattus norvegicus (Rat).